The sequence spans 388 residues: (S)-8-oxocitronellyl enol synthase ISY1 (388 aa).

NADP(+)-binding positions include 35-37 (TGI), 63-64 (RR), 81-82 (DV), 105-106 (TW), and Q143. Active-site residues include K147 and Y178. Residues Y178, I205, and 212-214 (SMM) each bind NADP(+).

This sequence belongs to the short-chain dehydrogenases/reductases (SDR) family.

The catalysed reaction is (S)-8-oxocitronellyl enol + NADP(+) = (6E)-8-oxogeranial + NADPH + H(+). It carries out the reaction (S)-8-oxocitronellyl enol + NAD(+) = (6E)-8-oxogeranial + NADH + H(+). In terms of biological role, iridoid synthase that catalyzes the first step in generation of the iridoid ring scaffold using the linear monoterpene (6E)-8-oxogeranial as substrate. Iridoids comprise a large family of distinctive bicyclic monoterpenes that possess a wide range of pharmacological activities, including anticancer, anti-inflammatory, antifungal and antibacterial activities. Catalyzes the conversion of the linear monoterpene (6E)-8-oxogeranial to (S)-8-oxocitronellyl enol, a precursor of nepetalactones, which are metabolites that are both insect-repellent and have euphoric effect in cats. In Nepeta cataria (Catnip), this protein is (S)-8-oxocitronellyl enol synthase ISY1.